Reading from the N-terminus, the 119-residue chain is Autophagy-related protein 8h (119 aa).

A lipid anchor (Phosphatidylethanolamine amidated glycine) is attached at glycine 119.

This sequence belongs to the ATG8 family. Interacts with ATG4. Interacts with ATI1. In terms of processing, gly-119 forms then a thioester bond with the 'Cys-558' of ATG7 (E1-like activating enzyme) before being transferred to the 'Cys-258' of ATG3 (the specific E2 conjugating enzyme), in order to be finally amidated with phosphatidylethanolamine. This lipid modification anchors ATG8 to autophagosomes. As to expression, constitutively expressed.

The protein resides in the cytoplasmic vesicle. The protein localises to the autophagosome membrane. It localises to the vacuole membrane. It is found in the cytoplasm. Its subcellular location is the cytoskeleton. Its function is as follows. Ubiquitin-like modifier involved in autophagosomes formation. May mediate the delivery of the autophagosomes to the vacuole via the microtubule cytoskeleton. The protein is Autophagy-related protein 8h (ATG8H) of Arabidopsis thaliana (Mouse-ear cress).